Here is a 290-residue protein sequence, read N- to C-terminus: ATP synthase gamma chain (290 aa).

Belongs to the ATPase gamma chain family. As to quaternary structure, F-type ATPases have 2 components, CF(1) - the catalytic core - and CF(0) - the membrane proton channel. CF(1) has five subunits: alpha(3), beta(3), gamma(1), delta(1), epsilon(1). CF(0) has three main subunits: a, b and c.

The protein resides in the cell membrane. Produces ATP from ADP in the presence of a proton gradient across the membrane. The gamma chain is believed to be important in regulating ATPase activity and the flow of protons through the CF(0) complex. This chain is ATP synthase gamma chain, found in Rubrobacter xylanophilus (strain DSM 9941 / JCM 11954 / NBRC 16129 / PRD-1).